An 87-amino-acid chain; its full sequence is Spore morphogenesis and germination protein YwcE (87 aa).

Transmembrane regions (helical) follow at residues 1 to 21 (MMDMFFAYLLVASATPLFIWL), 26 to 46 (VALSAIPPIILMWVFFFFYAT), and 56 to 76 (LMIILFAVNVIVAHIAAFIIY).

This sequence belongs to the YwcE family.

The protein resides in the cell membrane. It is found in the spore membrane. It localises to the spore outer membrane. Its function is as follows. Required for proper spore morphogenesis. Important for spore germination. This is Spore morphogenesis and germination protein YwcE (ywcE) from Bacillus subtilis (strain 168).